Reading from the N-terminus, the 178-residue chain is N-alpha-acetyltransferase 20 (178 aa).

One can recognise an N-acetyltransferase domain in the interval 2–157 (TTLRAFTCDD…DAYDMRKALS (156 aa)).

Belongs to the acetyltransferase family. ARD1 subfamily. As to quaternary structure, component of the N-terminal acetyltransferase B (NatB) complex which is composed of naa20 and naa25.

The protein localises to the cytoplasm. It is found in the nucleus. The enzyme catalyses N-terminal L-methionyl-L-asparaginyl-[protein] + acetyl-CoA = N-terminal N(alpha)-acetyl-L-methionyl-L-asparaginyl-[protein] + CoA + H(+). It carries out the reaction N-terminal L-methionyl-L-glutaminyl-[protein] + acetyl-CoA = N-terminal N(alpha)-acetyl-L-methionyl-L-glutaminyl-[protein] + CoA + H(+). It catalyses the reaction N-terminal L-methionyl-L-aspartyl-[protein] + acetyl-CoA = N-terminal N(alpha)-acetyl-L-methionyl-L-aspartyl-[protein] + CoA + H(+). The catalysed reaction is N-terminal L-methionyl-L-glutamyl-[protein] + acetyl-CoA = N-terminal N(alpha)-acetyl-L-methionyl-L-glutamyl-[protein] + CoA + H(+). Its function is as follows. Catalytic subunit of the NatB complex which catalyzes acetylation of the N-terminal methionine residues of peptides beginning with Met-Asp, Met-Glu, Met-Asn and Met-Gln. Proteins with cell cycle functions are overrepresented in the pool of NatB substrates. Required for maintaining the structure and function of actomyosin fibers and for proper cellular migration. The sequence is that of N-alpha-acetyltransferase 20 (naa20) from Danio rerio (Zebrafish).